The sequence spans 191 residues: Calcium and integrin-binding protein 1 (191 aa).

Gly2 is lipidated: N-myristoyl glycine. EF-hand domains are found at residues 103-138 (TPDI…LTGE) and 148-183 (EMKQ…SPDF). Residues Asp116, Asp118, Asp120, Thr122, Asp127, Asp161, Asp163, Asp165, Thr167, and Glu172 each coordinate Ca(2+).

As to quaternary structure, monomer. Interacts with the heterodimeric integrin alpha-IIb/beta3 (ITGA2B-ITGB3). Interacts with ITGA2B (via cytoplasmic domain); the interaction is direct and calcium-dependent. Interacts with the protein kinases PLK2/SNK and PRKDC (via the region immediately upstream of the kinase domain). Interacts with PLK3; the interaction inhibits PLK3 kinase activity. Interacts with PSEN2. Interacts (via C-terminus) with F8. Interacts with NBR1 (via C-terminus). Interacts with FEZ1 (via C-terminus). Interacts with UBR5 (via C-terminus); the interaction is sensitive to DNA damage, and may target CIB1 for ubiquitin-mediated degradation. Interacts with IFI6; the interaction is direct. Interacts with BCL2. Interacts with ITPR3; the interaction occurs in a calcium dependent manner. Interacts with PTK2/FAK1. Interacts with MAP3K5; the interaction inhibits MAP3K5 activation by phosphorylation, and its subsequent interaction with TRAF2. Interacts (via C-terminal region) with STMN2 (via the N-terminal region); the interaction is direct, occurs in a calcium-dependent manner and attenuates the STMN2-induced neurite outgrowth inhibition. Interacts with SPHK1, the interaction occurs in a calcium-dependent manner. Interacts with ITGA2B (via C-terminal cytoplasmic tail); the interaction occurs upon platelet aggregation and is stabilized/increased in a calcium and magnesium-dependent manner. Interacts with PAK1 (via N-terminal region); the interaction is direct and occurs in a calcium-dependent manner. Interacts with RAC3 (via C-terminal region); the interaction induces their association with the cytoskeleton upon alpha-IIb/beta3 integrin-mediated adhesion. Interacts with ITGA5 and ITGAV. Interacts with MYO1C. Interacts with ITGA2B (via C-terminal cytoplasmic tail region). Interacts (via C-terminal region) with PPP3R1; the interaction increases upon cardiomyocytes hypertrophy. Interacts with CACNA1C; the interaction increases upon cardiomyocytes hypertrophy. Interacts with TAS1R2 (via C-terminus); this interaction is independent of the myristoylation state of CIB1. Interacts and forms a complex with TMC6 and TMC8; the interaction stabilizes each component of the complex.

It localises to the membrane. The protein resides in the cell membrane. The protein localises to the sarcolemma. It is found in the apical cell membrane. Its subcellular location is the cell projection. It localises to the ruffle membrane. The protein resides in the filopodium tip. The protein localises to the growth cone. It is found in the lamellipodium. Its subcellular location is the cytoplasm. It localises to the cytoskeleton. The protein resides in the microtubule organizing center. The protein localises to the centrosome. It is found in the perinuclear region. Its subcellular location is the nucleus. It localises to the neuron projection. The protein resides in the perikaryon. Calcium-binding protein that plays a role in the regulation of numerous cellular processes, such as cell differentiation, cell division, cell proliferation, cell migration, thrombosis, angiogenesis, cardiac hypertrophy and apoptosis. Involved in bone marrow megakaryocyte differentiation by negatively regulating thrombopoietin-mediated signaling pathway. Participates in the endomitotic cell cycle of megakaryocyte, a form of mitosis in which both karyokinesis and cytokinesis are interrupted. Plays a role in integrin signaling by negatively regulating alpha-IIb/beta3 activation in thrombin-stimulated megakaryocytes preventing platelet aggregation. Up-regulates PTK2/FAK1 activity, and is also needed for the recruitment of PTK2/FAK1 to focal adhesions; it thus appears to play an important role in focal adhesion formation. Positively regulates cell migration on fibronectin in a CDC42-dependent manner, the effect being negatively regulated by PAK1. Functions as a negative regulator of stress activated MAP kinase (MAPK) signaling pathways. Down-regulates inositol 1,4,5-trisphosphate receptor-dependent calcium signaling. Involved in sphingosine kinase SPHK1 translocation to the plasma membrane in a N-myristoylation-dependent manner preventing TNF-alpha-induced apoptosis. Regulates serine/threonine-protein kinase PLK3 activity for proper completion of cell division progression. Plays a role in microtubule (MT) dynamics during neuronal development; disrupts the MT depolymerization activity of STMN2 attenuating NGF-induced neurite outgrowth and the MT reorganization at the edge of lamellipodia. Promotes cardiomyocyte hypertrophy via activation of the calcineurin/NFAT signaling pathway. Stimulates calcineurin PPP3R1 activity by mediating its anchoring to the sarcolemma. In ischemia-induced (pathological or adaptive) angiogenesis, stimulates endothelial cell proliferation, migration and microvessel formation by activating the PAK1 and ERK1/ERK2 signaling pathway. Also promotes cancer cell survival and proliferation. May regulate cell cycle and differentiation of spermatogenic germ cells, and/or differentiation of supporting Sertoli cells. Forms a complex with TMC6/EVER1 and TMC8/EVER2 in lymphocytes and keratynocytes where CIB1 stabilizes TMC6 and TMC8 levels and reciprocally. This is Calcium and integrin-binding protein 1 (CIB1) from Bos taurus (Bovine).